Reading from the N-terminus, the 270-residue chain is F-actin-capping protein subunit beta (270 aa).

Over residues 245–258 the composition is skewed to polar residues; that stretch reads QTRSQKSTTDSQEQ. The segment at 245 to 270 is disordered; sequence QTRSQKSTTDSQEQQQKEVIKGLQNL.

The protein belongs to the F-actin-capping protein beta subunit family. As to quaternary structure, component of the F-actin capping complex, composed of a heterodimer of an alpha and a beta subunit.

It is found in the cytoplasm. The protein resides in the cytoskeleton. The protein localises to the actin patch. In terms of biological role, F-actin-capping proteins bind in a Ca(2+)-independent manner to the fast growing ends of actin filaments (barbed end) thereby blocking the exchange of subunits at these ends. Unlike other capping proteins (such as gelsolin and severin), these proteins do not sever actin filaments. The polypeptide is F-actin-capping protein subunit beta (CAP2) (Candida glabrata (strain ATCC 2001 / BCRC 20586 / JCM 3761 / NBRC 0622 / NRRL Y-65 / CBS 138) (Yeast)).